A 384-amino-acid polypeptide reads, in one-letter code: Succinyl-diaminopimelate desuccinylase (384 aa).

H72 provides a ligand contact to Zn(2+). D74 is an active-site residue. D105 is a binding site for Zn(2+). Catalysis depends on E139, which acts as the Proton acceptor. Positions 140, 168, and 355 each coordinate Zn(2+).

Belongs to the peptidase M20A family. DapE subfamily. In terms of assembly, homodimer. The cofactor is Zn(2+). Co(2+) is required as a cofactor.

It carries out the reaction N-succinyl-(2S,6S)-2,6-diaminopimelate + H2O = (2S,6S)-2,6-diaminopimelate + succinate. The protein operates within amino-acid biosynthesis; L-lysine biosynthesis via DAP pathway; LL-2,6-diaminopimelate from (S)-tetrahydrodipicolinate (succinylase route): step 3/3. In terms of biological role, catalyzes the hydrolysis of N-succinyl-L,L-diaminopimelic acid (SDAP), forming succinate and LL-2,6-diaminopimelate (DAP), an intermediate involved in the bacterial biosynthesis of lysine and meso-diaminopimelic acid, an essential component of bacterial cell walls. The protein is Succinyl-diaminopimelate desuccinylase of Blochmanniella pennsylvanica (strain BPEN).